The primary structure comprises 176 residues: Interleukin-1 receptor antagonist protein (176 aa).

An N-terminal signal peptide occupies residues 1–25; it reads METCRCPLSYLISFLLFLSHSETAC. The cysteines at positions 91 and 141 are disulfide-linked. An N-linked (GlcNAc...) asparagine glycan is attached at Asn-109.

It belongs to the IL-1 family.

Its subcellular location is the secreted. Anti-inflammatory antagonist of interleukin-1 family of proinflammatory cytokines such as interleukin-1beta/IL1B and interleukin-1alpha/IL1A. Protects from immune dysregulation and uncontrolled systemic inflammation triggered by IL1 for a range of innate stimulatory agents such as pathogens. The sequence is that of Interleukin-1 receptor antagonist protein (IL1RN) from Canis lupus familiaris (Dog).